Consider the following 627-residue polypeptide: tRNA uridine 5-carboxymethylaminomethyl modification enzyme MnmG (627 aa).

FAD-binding positions include 16–21, Val128, and Ser183; that span reads GAGHAG. Residue 277 to 291 participates in NAD(+) binding; sequence GPRYCPSIEDKIVRF. Gln374 contacts FAD.

This sequence belongs to the MnmG family. As to quaternary structure, homodimer. Heterotetramer of two MnmE and two MnmG subunits. The cofactor is FAD.

The protein resides in the cytoplasm. Functionally, NAD-binding protein involved in the addition of a carboxymethylaminomethyl (cmnm) group at the wobble position (U34) of certain tRNAs, forming tRNA-cmnm(5)s(2)U34. The protein is tRNA uridine 5-carboxymethylaminomethyl modification enzyme MnmG of Finegoldia magna (strain ATCC 29328 / DSM 20472 / WAL 2508) (Peptostreptococcus magnus).